Consider the following 852-residue polypeptide: Bifunctional uridylyltransferase/uridylyl-removing enzyme (852 aa).

A uridylyltransferase region spans residues 1–318; the sequence is MPENLSSALE…STPMRVTLRI (318 aa). Positions 319-672 are uridylyl-removing; it reads DDDYIQVNNQ…SRILPQSDSF (354 aa). Residues 436–558 enclose the HD domain; it reads VDDHILAVVR…VQTHERLSAL (123 aa). ACT domains are found at residues 673–757 and 785–852; these read QVMV…SCNR and SVEI…EQLA.

Belongs to the GlnD family. Mg(2+) serves as cofactor.

It catalyses the reaction [protein-PII]-L-tyrosine + UTP = [protein-PII]-uridylyl-L-tyrosine + diphosphate. The enzyme catalyses [protein-PII]-uridylyl-L-tyrosine + H2O = [protein-PII]-L-tyrosine + UMP + H(+). Uridylyltransferase (UTase) activity is inhibited by glutamine, while glutamine activates uridylyl-removing (UR) activity. Its function is as follows. Modifies, by uridylylation and deuridylylation, the PII regulatory proteins (GlnB and homologs), in response to the nitrogen status of the cell that GlnD senses through the glutamine level. Under low glutamine levels, catalyzes the conversion of the PII proteins and UTP to PII-UMP and PPi, while under higher glutamine levels, GlnD hydrolyzes PII-UMP to PII and UMP (deuridylylation). Thus, controls uridylylation state and activity of the PII proteins, and plays an important role in the regulation of nitrogen assimilation and metabolism. The sequence is that of Bifunctional uridylyltransferase/uridylyl-removing enzyme from Neisseria gonorrhoeae (strain NCCP11945).